A 740-amino-acid polypeptide reads, in one-letter code: DNA-directed RNA polymerase subunit beta' (740 aa).

Positions 65, 67, 103, and 106 each coordinate Zn(2+). Mg(2+) is bound by residues D539, D541, and D543.

This sequence belongs to the RNA polymerase beta' chain family. RpoC1 subfamily. In terms of assembly, in plastids the minimal PEP RNA polymerase catalytic core is composed of four subunits: alpha, beta, beta', and beta''. When a (nuclear-encoded) sigma factor is associated with the core the holoenzyme is formed, which can initiate transcription. It depends on Mg(2+) as a cofactor. Zn(2+) serves as cofactor.

The protein resides in the plastid. It is found in the chloroplast. The catalysed reaction is RNA(n) + a ribonucleoside 5'-triphosphate = RNA(n+1) + diphosphate. Functionally, DNA-dependent RNA polymerase catalyzes the transcription of DNA into RNA using the four ribonucleoside triphosphates as substrates. This chain is DNA-directed RNA polymerase subunit beta', found in Ostreococcus tauri.